A 403-amino-acid polypeptide reads, in one-letter code: Na(+)/H(+) antiporter NhaH (403 aa).

12 consecutive transmembrane segments (helical) span residues 7 to 27 (VFIQ…IAKL), 34 to 54 (VALV…IEEA), 99 to 119 (LAFL…YFLL), 125 to 145 (VAFT…LSIF), 168 to 188 (IAVV…EMGW), 196 to 216 (FMFL…GYVF), 228 to 245 (LEVA…FIAE), 250 to 272 (SGVI…IGMS), 282 to 302 (FWDS…GLEI), 311 to 331 (WGYI…AVYI), 345 to 365 (ILIN…LSLP), and 373 to 393 (QVLL…GLTL).

The protein belongs to the monovalent cation:proton antiporter 1 (CPA1) transporter (TC 2.A.36) family.

The protein localises to the cell membrane. Na(+)/H(+) antiporter that extrudes sodium in exchange for external protons. Can also transport lithium. This chain is Na(+)/H(+) antiporter NhaH (nhaH), found in Halobacillus aidingensis.